A 354-amino-acid polypeptide reads, in one-letter code: P2Y purinoceptor 13 (354 aa).

At 1-49 (MTAAIRRQRELSILPKVTLEAMNTTVMQGFNRSERCPRDTRIVQLVFPA) the chain is on the extracellular side. Asn23 and Asn31 each carry an N-linked (GlcNAc...) asparagine glycan. A helical membrane pass occupies residues 50–70 (LYTVVFLTGILLNTLALWVFV). The Cytoplasmic portion of the chain corresponds to 71–77 (HIPSSST). Residues 78-98 (FIIYLKNTLVADLIMTLMLPF) form a helical membrane-spanning segment. Residues 99–117 (KILSDSHLAPWQLRAFVCR) lie on the Extracellular side of the membrane. Cys116 and Cys194 form a disulfide bridge. A helical membrane pass occupies residues 118-138 (FSSVIFYETMYVGIVLLGLIA). Over 139 to 161 (FDRFLKIIRPLRNIFLKKPVFAK) the chain is Cytoplasmic. Residues 162–182 (TVSIFIWFFLFFISLPNTILS) form a helical membrane-spanning segment. The Extracellular segment spans residues 183-211 (NKEATPSSVKKCASLKGPLGLKWHQMVNN). The helical transmembrane segment at 212–232 (ICQFIFWTVFILMLVFYVVIA) threads the bilayer. The Cytoplasmic segment spans residues 233-252 (KKVYDSYRKSKSKDRKNNKK). The chain crosses the membrane as a helical span at residues 253–273 (LEGKVFVVVAVFFVCFAPFHF). The Extracellular portion of the chain corresponds to 274-300 (ARVPYTHSQTNNKTDCRLQNQLFIAKE). N-linked (GlcNAc...) asparagine glycosylation occurs at Asn285. A helical membrane pass occupies residues 301–321 (TTLFLAATNICMDPLIYIFLC). At 322–333 (KKFTEKLPCMQG) the chain is on the cytoplasmic side. Positions 335–354 (KTTASSQENHSSQTDNITLG) are disordered.

Belongs to the G-protein coupled receptor 1 family. Strong expression in spleen and adult brain. Lower expression in placenta, lung, liver, spinal cord, thymus, small intestine, uterus, stomach, testis, fetal brain, and adrenal gland. Not detected in pancreas, heart, kidney, skeletal muscle, ovary or fetal aorta. Clearly detected in lymph node and bone marrow, weakly detected in peripheral blood mononuclear cells (PBMC) and in peripheral blood leukocytes (PBL), but not detected in polymorphonuclear cells (PMN). In the brain, detected in all brain regions examined.

It localises to the cell membrane. Its function is as follows. Receptor for ADP. Coupled to G(i)-proteins. May play a role in hematopoiesis and the immune system. The polypeptide is P2Y purinoceptor 13 (P2RY13) (Homo sapiens (Human)).